Consider the following 291-residue polypeptide: Ecto-ADP-ribosyltransferase 5 (291 aa).

The first 22 residues, 1-22 (MALAALMIALGSLGLHTWQAQA), serve as a signal peptide directing secretion. Cys-42 and Cys-258 are joined by a disulfide. Residues 62–252 (ALLRESWEAA…LVTLWSYNQT (191 aa)) form the TR mART core domain. Tyr-99 provides a ligand contact to NAD(+). N-linked (GlcNAc...) asparagine glycosylation occurs at Asn-101. 2 residues coordinate NAD(+): Arg-160 and Gln-180. The active site involves Arg-160. Ser-183 is a catalytic residue. An N-linked (GlcNAc...) asparagine glycan is attached at Asn-196. Ser-214 contributes to the NAD(+) binding site. Glu-221 is a catalytic residue. Asn-250 carries an N-linked (GlcNAc...) asparagine glycan.

The protein belongs to the Arg-specific ADP-ribosyltransferase family.

It is found in the secreted. The catalysed reaction is L-arginyl-[protein] + NAD(+) = N(omega)-(ADP-D-ribosyl)-L-arginyl-[protein] + nicotinamide + H(+). This chain is Ecto-ADP-ribosyltransferase 5 (ART5), found in Homo sapiens (Human).